The following is a 106-amino-acid chain: MIITTTEQVPGYRVKEILGVVSGNVVMSKHLGRDIAAAFKTLAGGEIKGYTEMLTEARNIALERMMKEAEKLGADAVIGFRYSSSTIMSGAAEILAYGTAVKLEKI.

This sequence belongs to the UPF0145 family.

This is UPF0145 protein TM_0763 from Thermotoga maritima (strain ATCC 43589 / DSM 3109 / JCM 10099 / NBRC 100826 / MSB8).